We begin with the raw amino-acid sequence, 534 residues long: Nitrate/nitrite transporter NrtP (534 aa).

Helical transmembrane passes span 19–39 (WFAFFLSFVVWFNFPPFATTI), 52–72 (TIGLCNVALTVPARIIIGMLL), 79–99 (LTYSLLLIYAAVPCLIFATAQ), 109–129 (LLMGIVGAGFVIGIRMVAEWF), 150–170 (AFSAFTMVIFGIILAFLPGAF), 195–215 (AAIAGTGIIAALYGMLYYFSV), 240–260 (DFWFLLAMNLPLTLILMVLAW), 266–286 (NFLNGTGFAIAILALVGLYLF), 382–404 (WTMVVLTVGMGVGYLLMSSVAGT), 409–431 (IAVLLTMACSFFVQAAEGSTFAI), 445–465 (GNVGAYGNVGAVAYLTVLLLL), and 485–505 (GFFQVLGITGLIVAFLCAFFL).

Belongs to the major facilitator superfamily. Nitrate/nitrite porter (TC 2.A.1.8) family.

It localises to the cell inner membrane. Functionally, high-efficiency transport system for both nitrate and nitrite. The chain is Nitrate/nitrite transporter NrtP from Picosynechococcus sp. (strain ATCC 27264 / PCC 7002 / PR-6) (Agmenellum quadruplicatum).